A 237-amino-acid polypeptide reads, in one-letter code: Putative biotin ligase (237 aa).

The BPL/LPL catalytic domain maps to 1–191; the sequence is MEIIHLSEID…KKYKKYSITI (191 aa).

Belongs to the biotin--protein ligase family.

It carries out the reaction biotin + L-lysyl-[protein] + ATP = N(6)-biotinyl-L-lysyl-[protein] + AMP + diphosphate + H(+). This chain is Putative biotin ligase, found in Methanocaldococcus jannaschii (strain ATCC 43067 / DSM 2661 / JAL-1 / JCM 10045 / NBRC 100440) (Methanococcus jannaschii).